Consider the following 198-residue polypeptide: Probable GTP-binding protein EngB (198 aa).

An EngB-type G domain is found at 22-195 (GHPEIAFLGR…WSWLEQTAGL (174 aa)). Residues 30-37 (GRSNVGKS), 57-61 (GKTQT), 75-78 (DVPG), 142-145 (TKID), and 174-176 (FSA) contribute to the GTP site. Mg(2+)-binding residues include S37 and T59.

This sequence belongs to the TRAFAC class TrmE-Era-EngA-EngB-Septin-like GTPase superfamily. EngB GTPase family. Requires Mg(2+) as cofactor.

Necessary for normal cell division and for the maintenance of normal septation. The protein is Probable GTP-binding protein EngB of Lacticaseibacillus paracasei (strain ATCC 334 / BCRC 17002 / CCUG 31169 / CIP 107868 / KCTC 3260 / NRRL B-441) (Lactobacillus paracasei).